The sequence spans 438 residues: Probable inactive protein kinase 38 (438 aa).

Positions 77–340 (PRFRLALGKG…FTELQPQYFL (264 aa)) constitute a Protein kinase domain.

Belongs to the protein kinase superfamily. Tyr protein kinase family.

This is Probable inactive protein kinase 38 (36) from Equus caballus (Horse).